The primary structure comprises 2026 residues: Fatty acid synthase subunit beta (2026 aa).

The acetyltransferase (AT) domain stretch occupies residues 148-526 (ILMAFGGQGS…VDGRGVRIIA (379 aa)). The active-site For acetyltransferase activity is Ser-268. An enoyl reductase (ER) domain region spans residues 579–824 (SQLLQAPPII…LILAAAGVAD (246 aa)). Residues 1130–1604 (SQVTGSVRSA…LPGDQLTVRI (475 aa)) are dehydratase (DH) domain. The MaoC-like domain occupies 1512 to 1625 (PGLIDNGSRT…LSVAAYREGT (114 aa)). The interval 1643-2016 (YLFTGQGSQA…LEEAAAVTGS (374 aa)) is malonyl/palmitoyl transferase (MT/PT) domain. Ser-1788 serves as the catalytic For malonyltransferase activity.

This sequence belongs to the fungal fatty acid synthetase subunit beta family. [Alpha(6)beta(6)] hexamers of two multifunctional subunits (alpha and beta).

It carries out the reaction acetyl-CoA + n malonyl-CoA + 2n NADPH + 4n H(+) = a long-chain-acyl-CoA + n CoA + n CO2 + 2n NADP(+).. The catalysed reaction is holo-[ACP] + acetyl-CoA = acetyl-[ACP] + CoA. It catalyses the reaction holo-[ACP] + malonyl-CoA = malonyl-[ACP] + CoA. The enzyme catalyses a (3R)-hydroxyacyl-[ACP] = a (2E)-enoyl-[ACP] + H2O. It carries out the reaction a 2,3-saturated acyl-[ACP] + NAD(+) = a (2E)-enoyl-[ACP] + NADH + H(+). The catalysed reaction is (9Z)-octadecenoyl-[ACP] + H2O = (9Z)-octadecenoate + holo-[ACP] + H(+). It functions in the pathway secondary metabolite biosynthesis. Functionally, fatty acid synthase beta subunit; part of the gene cluster that mediates the biosynthesis of oryzines, natural products with an unusual maleidride backbone. The two subunits of the fungal fatty acid synthase oryfasA and oryfasB probably form octenoic acid. This fatty acid is most likely activated by the acyl-CoA ligase oryP to give octenyl-CoA before the citrate synthase-like protein oryE catalyzes condensation with oxaloacetate to form tricarboxylic acid. The next steps of the pathways are conjectural, but a favorite possible route has been proposed, beginning with decarboxylation and concomitant dehydration by the decarboxylase oryM, followed by tautomerization, which may lead to the production of a diene intermediate. Reduction of this diene intermediate could give the known metabolite piliformic acid. On the pathway to oryzine B and oryzine A, however, hydroxylation of the diene by the alpha-ketoglutarate-dependent dioxygenase oryG and lactonisation by the lactonohydrolases oryH or oryL could give oryzine B directly. Finally, enoyl reduction by the dehydrogenase oryD would then convert oryzine B into oryzine A. The polypeptide is Fatty acid synthase subunit beta (Aspergillus oryzae (strain ATCC 42149 / RIB 40) (Yellow koji mold)).